The sequence spans 172 residues: 3-hydroxydecanoyl-[acyl-carrier-protein] dehydratase (172 aa).

His71 is a catalytic residue.

It belongs to the thioester dehydratase family. FabA subfamily. In terms of assembly, homodimer.

The protein resides in the cytoplasm. It catalyses the reaction a (3R)-hydroxyacyl-[ACP] = a (2E)-enoyl-[ACP] + H2O. The catalysed reaction is (3R)-hydroxydecanoyl-[ACP] = (2E)-decenoyl-[ACP] + H2O. The enzyme catalyses (2E)-decenoyl-[ACP] = (3Z)-decenoyl-[ACP]. Its pathway is lipid metabolism; fatty acid biosynthesis. Functionally, necessary for the introduction of cis unsaturation into fatty acids. Catalyzes the dehydration of (3R)-3-hydroxydecanoyl-ACP to E-(2)-decenoyl-ACP and then its isomerization to Z-(3)-decenoyl-ACP. Can catalyze the dehydratase reaction for beta-hydroxyacyl-ACPs with saturated chain lengths up to 16:0, being most active on intermediate chain length. The chain is 3-hydroxydecanoyl-[acyl-carrier-protein] dehydratase from Yersinia enterocolitica serotype O:8 / biotype 1B (strain NCTC 13174 / 8081).